A 77-amino-acid chain; its full sequence is Probable Fe(2+)-trafficking protein (77 aa).

The protein belongs to the Fe(2+)-trafficking protein family.

Functionally, could be a mediator in iron transactions between iron acquisition and iron-requiring processes, such as synthesis and/or repair of Fe-S clusters in biosynthetic enzymes. In Baumannia cicadellinicola subsp. Homalodisca coagulata, this protein is Probable Fe(2+)-trafficking protein.